Consider the following 314-residue polypeptide: E3 ubiquitin-protein ligase CHIP (314 aa).

Over residues 1–11 (MKGKEEREREG) the composition is skewed to basic and acidic residues. Residues 1–47 (MKGKEEREREGGGGAVGPGAAGPGAGGGSPEKSHSAQEHKEQGNRLF) are disordered. The span at 12 to 29 (GGGAVGPGAAGPGAGGGS) shows a compositional bias: gly residues. The span at 31–43 (EKSHSAQEHKEQG) shows a compositional bias: basic and acidic residues. 3 TPR repeats span residues 36–69 (AQEHKEQGNRLFGGRKYPEAAAAYGRAINRNPLV), 70–103 (AVYYTNRALCYLKMQQHDKALADCKRALELDGQS), and 105–137 (KAHFFLGQCQMEMENYDEAIANLQRAYNLAKEQ). Positions 237–311 (DIPDYLCGKI…DAFISENGWV (75 aa)) constitute a U-box domain.

As to quaternary structure, homodimer.

Its subcellular location is the cytoplasm. The protein resides in the nucleus. It localises to the mitochondrion. The enzyme catalyses S-ubiquitinyl-[E2 ubiquitin-conjugating enzyme]-L-cysteine + [acceptor protein]-L-lysine = [E2 ubiquitin-conjugating enzyme]-L-cysteine + N(6)-ubiquitinyl-[acceptor protein]-L-lysine.. Its function is as follows. E3 ubiquitin-protein ligase which targets misfolded chaperone substrates towards proteasomal degradation. Collaborates with ATXN3 in the degradation of misfolded chaperone substrates: ATXN3 restricting the length of ubiquitin chain attached to STUB1/CHIP substrates and preventing further chain extension. In Gallus gallus (Chicken), this protein is E3 ubiquitin-protein ligase CHIP.